We begin with the raw amino-acid sequence, 87 residues long: Cell division topological specificity factor (87 aa).

It belongs to the MinE family.

Prevents the cell division inhibition by proteins MinC and MinD at internal division sites while permitting inhibition at polar sites. This ensures cell division at the proper site by restricting the formation of a division septum at the midpoint of the long axis of the cell. This is Cell division topological specificity factor from Vibrio vulnificus (strain CMCP6).